The following is a 389-amino-acid chain: Chalcone synthase 4 (389 aa).

Cysteine 164 is an active-site residue.

Belongs to the thiolase-like superfamily. Chalcone/stilbene synthases family.

The catalysed reaction is (E)-4-coumaroyl-CoA + 3 malonyl-CoA + 3 H(+) = 2',4,4',6'-tetrahydroxychalcone + 3 CO2 + 4 CoA. Its pathway is secondary metabolite biosynthesis; flavonoid biosynthesis. In terms of biological role, the primary product of this enzyme is 4,2',4',6'-tetrahydroxychalcone (also termed naringenin-chalcone or chalcone) which can under specific conditions spontaneously isomerize into naringenin. The protein is Chalcone synthase 4 (CHS4) of Medicago sativa (Alfalfa).